A 343-amino-acid chain; its full sequence is Heat-inducible transcription repressor HrcA (343 aa).

This sequence belongs to the HrcA family.

Functionally, negative regulator of class I heat shock genes (grpE-dnaK-dnaJ and groELS operons). Prevents heat-shock induction of these operons. In Clostridium acetobutylicum (strain ATCC 824 / DSM 792 / JCM 1419 / IAM 19013 / LMG 5710 / NBRC 13948 / NRRL B-527 / VKM B-1787 / 2291 / W), this protein is Heat-inducible transcription repressor HrcA.